Consider the following 396-residue polypeptide: S-adenosylmethionine synthase (396 aa).

Histidine 14 lines the ATP pocket. Aspartate 16 lines the Mg(2+) pocket. Glutamate 42 contacts K(+). The L-methionine site is built by glutamate 55 and glutamine 98. The flexible loop stretch occupies residues 98 to 108 (QSPDIALGVNE). ATP-binding positions include 174–176 (DGK), 241–242 (RF), aspartate 250, 256–257 (RK), alanine 273, and lysine 277. Aspartate 250 lines the L-methionine pocket. Lysine 281 is a binding site for L-methionine.

Belongs to the AdoMet synthase family. In terms of assembly, homotetramer; dimer of dimers. Mg(2+) is required as a cofactor. It depends on K(+) as a cofactor.

Its subcellular location is the cytoplasm. The enzyme catalyses L-methionine + ATP + H2O = S-adenosyl-L-methionine + phosphate + diphosphate. It participates in amino-acid biosynthesis; S-adenosyl-L-methionine biosynthesis; S-adenosyl-L-methionine from L-methionine: step 1/1. Its function is as follows. Catalyzes the formation of S-adenosylmethionine (AdoMet) from methionine and ATP. The overall synthetic reaction is composed of two sequential steps, AdoMet formation and the subsequent tripolyphosphate hydrolysis which occurs prior to release of AdoMet from the enzyme. The sequence is that of S-adenosylmethionine synthase from Fervidobacterium nodosum (strain ATCC 35602 / DSM 5306 / Rt17-B1).